The sequence spans 557 residues: Probable tRNA-splicing endonuclease subunit tsp-5 (557 aa).

5 disordered regions span residues 1 to 36 (MPLDDDLEDNPSLVPPPSTTTTSSNATGDAATMMDE), 131 to 152 (KLTKRGKEGAGEDDEEEKDRKL), 225 to 252 (SVPAAAAATTSAKGEGEQRTEEDEEDDD), 370 to 403 (PSSTSSSASPTADNQPQKPQSPESDESDSGSDSP), and 514 to 557 (SGGP…GRGN). A compositionally biased stretch (basic and acidic residues) spans 131 to 140 (KLTKRGKEGA). The segment covering 370-381 (PSSTSSSASPTA) has biased composition (low complexity). 2 stretches are compositionally biased toward gly residues: residues 517–527 (PRRGGGGGGKK) and 538–549 (GRGGGRGGGRGG).

Belongs to the SEN54 family. As to quaternary structure, tRNA splicing endonuclease is a heterotetramer composed of tsp-2/sen2, tsp-1/sen15, tsp-4/sen34 and tsp-5/sen54. Interacts directly with tsp-2/sen2.

Functionally, non-catalytic subunit of the tRNA-splicing endonuclease complex, a complex responsible for identification and cleavage of the splice sites in pre-tRNA. It cleaves pre-tRNA at the 5' and 3' splice sites to release the intron. The products are an intron and two tRNA half-molecules bearing 2',3' cyclic phosphate and 5'-OH termini. There are no conserved sequences at the splice sites, but the intron is invariably located at the same site in the gene, placing the splice sites an invariant distance from the constant structural features of the tRNA body. May be required to embody the molecular ruler of the complex. The polypeptide is Probable tRNA-splicing endonuclease subunit tsp-5 (tsp-5) (Neurospora crassa (strain ATCC 24698 / 74-OR23-1A / CBS 708.71 / DSM 1257 / FGSC 987)).